A 617-amino-acid chain; its full sequence is Glutamyl-tRNA(Gln) amidotransferase subunit E (617 aa).

This sequence belongs to the GatB/GatE family. GatE subfamily. As to quaternary structure, heterodimer of GatD and GatE.

It carries out the reaction L-glutamyl-tRNA(Gln) + L-glutamine + ATP + H2O = L-glutaminyl-tRNA(Gln) + L-glutamate + ADP + phosphate + H(+). Functionally, allows the formation of correctly charged Gln-tRNA(Gln) through the transamidation of misacylated Glu-tRNA(Gln) in organisms which lack glutaminyl-tRNA synthetase. The reaction takes place in the presence of glutamine and ATP through an activated gamma-phospho-Glu-tRNA(Gln). The GatDE system is specific for glutamate and does not act on aspartate. The polypeptide is Glutamyl-tRNA(Gln) amidotransferase subunit E (Natronomonas pharaonis (strain ATCC 35678 / DSM 2160 / CIP 103997 / JCM 8858 / NBRC 14720 / NCIMB 2260 / Gabara) (Halobacterium pharaonis)).